Reading from the N-terminus, the 106-residue chain is Putative regulatory protein MalR (106 aa).

The HTH hxlR-type domain occupies 12-106; the sequence is CSIEYTLSFM…NLMHKWGQEN (95 aa).

Its function is as follows. Potential regulator of the malBH genes. In Fusobacterium mortiferum, this protein is Putative regulatory protein MalR (malR).